The primary structure comprises 293 residues: Transcriptional regulator ICP22 homolog (293 aa).

Disordered stretches follow at residues 1 to 49 and 175 to 293; these read MPHG…QRID and RFLE…SARR. A compositionally biased stretch (low complexity) spans 21–31; it reads TPSTSPLIPSL. Residues 190–210 are compositionally biased toward acidic residues; that stretch reads EECDVSGDESPSEEEEEDEAS. The segment covering 272–281 has biased composition (basic residues); sequence AAKKRRKRQP. Residues 282-293 show a composition bias toward basic and acidic residues; it reads PKGERPTKSARR.

This sequence belongs to the herpesviridae ICP22 family.

The sequence is that of Transcriptional regulator ICP22 homolog (IR4) from Equus caballus (Horse).